A 436-amino-acid polypeptide reads, in one-letter code: MAKIVKVIGREIIDSRGNPTVEAEVHLEGGFVGLAAAPSGASTGSREALELRDGDKSRFLGKGVLKAVSAVNNEIAQAILGKDGSAQTEIDQIMIDLDGTDNKSKFGANAILAVSLATAKAAAASKGLPLYAYIAELNGTPGVYSMPLPMMNIINGGEHADNNVDIQEFMIQPVGASTLKEALRIGAEVFHNLAKVLKSKGLNTAVGDEGGFAPNLASNADALACIKEAVEKAGYVLGKDVTLAMDCASSEFYNKENGLYEMKGEGKSFTSQEFTHYLEGLCNEYPIKSIEDGQDESDWEGFAYQTKVLGGKIQLVGDDLFVTNTKILKEGIEKGIANSILIKFNQIGSLTETLAAIKMAKDAGYTAVISHRSGETEDATIADLAVGTAAGQIKTGSMSRSDRVAKYNQLIRIEEALAAAGTPAPFNGLKEVKGQA.

Position 167 (Gln167) interacts with (2R)-2-phosphoglycerate. The active-site Proton donor is the Glu209. Mg(2+)-binding residues include Asp246, Glu291, and Asp318. 4 residues coordinate (2R)-2-phosphoglycerate: Lys343, Arg372, Ser373, and Lys394. Lys343 acts as the Proton acceptor in catalysis.

This sequence belongs to the enolase family. Component of the RNA degradosome, a multiprotein complex involved in RNA processing and mRNA degradation. It depends on Mg(2+) as a cofactor.

The protein resides in the cytoplasm. Its subcellular location is the secreted. The protein localises to the cell surface. It carries out the reaction (2R)-2-phosphoglycerate = phosphoenolpyruvate + H2O. It functions in the pathway carbohydrate degradation; glycolysis; pyruvate from D-glyceraldehyde 3-phosphate: step 4/5. In terms of biological role, catalyzes the reversible conversion of 2-phosphoglycerate (2-PG) into phosphoenolpyruvate (PEP). It is essential for the degradation of carbohydrates via glycolysis. The polypeptide is Enolase (Actinobacillus pleuropneumoniae serotype 3 (strain JL03)).